The primary structure comprises 532 residues: Bifunctional purine biosynthesis protein PurH (532 aa).

An MGS-like domain is found at 1-149 (MTDPAPLTRA…KNHGAVTVLT (149 aa)).

The protein belongs to the PurH family.

The catalysed reaction is (6R)-10-formyltetrahydrofolate + 5-amino-1-(5-phospho-beta-D-ribosyl)imidazole-4-carboxamide = 5-formamido-1-(5-phospho-D-ribosyl)imidazole-4-carboxamide + (6S)-5,6,7,8-tetrahydrofolate. It catalyses the reaction IMP + H2O = 5-formamido-1-(5-phospho-D-ribosyl)imidazole-4-carboxamide. The protein operates within purine metabolism; IMP biosynthesis via de novo pathway; 5-formamido-1-(5-phospho-D-ribosyl)imidazole-4-carboxamide from 5-amino-1-(5-phospho-D-ribosyl)imidazole-4-carboxamide (10-formyl THF route): step 1/1. It participates in purine metabolism; IMP biosynthesis via de novo pathway; IMP from 5-formamido-1-(5-phospho-D-ribosyl)imidazole-4-carboxamide: step 1/1. This is Bifunctional purine biosynthesis protein PurH from Jannaschia sp. (strain CCS1).